The sequence spans 317 residues: ATP synthase gamma chain (317 aa).

The protein belongs to the ATPase gamma chain family. As to quaternary structure, F-type ATPases have 2 components, CF(1) - the catalytic core - and CF(0) - the membrane proton channel. CF(1) has five subunits: alpha(3), beta(3), gamma(1), delta(1), epsilon(1). CF(0) has three main subunits: a, b and c.

It localises to the cellular thylakoid membrane. In terms of biological role, produces ATP from ADP in the presence of a proton gradient across the membrane. The gamma chain is believed to be important in regulating ATPase activity and the flow of protons through the CF(0) complex. The protein is ATP synthase gamma chain of Synechococcus sp. (strain CC9902).